Consider the following 165-residue polypeptide: Large ribosomal subunit protein uL11A (165 aa).

Arg67 carries the post-translational modification N5-methylarginine.

It belongs to the universal ribosomal protein uL11 family. As to quaternary structure, component of the large ribosomal subunit (LSU). Mature yeast ribosomes consist of a small (40S) and a large (60S) subunit. The 40S small subunit contains 1 molecule of ribosomal RNA (18S rRNA) and at least 33 different proteins. The large 60S subunit contains 3 rRNA molecules (25S, 5.8S and 5S rRNA) and at least 46 different proteins.

It localises to the cytoplasm. The protein resides in the nucleus. The protein localises to the nucleolus. Functionally, this protein binds directly to 26S ribosomal RNA. Its function is as follows. Component of the ribosome, a large ribonucleoprotein complex responsible for the synthesis of proteins in the cell. The small ribosomal subunit (SSU) binds messenger RNAs (mRNAs) and translates the encoded message by selecting cognate aminoacyl-transfer RNA (tRNA) molecules. The large subunit (LSU) contains the ribosomal catalytic site termed the peptidyl transferase center (PTC), which catalyzes the formation of peptide bonds, thereby polymerizing the amino acids delivered by tRNAs into a polypeptide chain. The nascent polypeptides leave the ribosome through a tunnel in the LSU and interact with protein factors that function in enzymatic processing, targeting, and the membrane insertion of nascent chains at the exit of the ribosomal tunnel. The chain is Large ribosomal subunit protein uL11A (rpl1201) from Schizosaccharomyces pombe (strain 972 / ATCC 24843) (Fission yeast).